The sequence spans 404 residues: NADH-quinone oxidoreductase subunit D 1 (404 aa).

Belongs to the complex I 49 kDa subunit family. As to quaternary structure, NDH-1 is composed of 14 different subunits. Subunits NuoB, C, D, E, F, and G constitute the peripheral sector of the complex.

It localises to the cell inner membrane. It carries out the reaction a quinone + NADH + 5 H(+)(in) = a quinol + NAD(+) + 4 H(+)(out). In terms of biological role, NDH-1 shuttles electrons from NADH, via FMN and iron-sulfur (Fe-S) centers, to quinones in the respiratory chain. The immediate electron acceptor for the enzyme in this species is believed to be ubiquinone. Couples the redox reaction to proton translocation (for every two electrons transferred, four hydrogen ions are translocated across the cytoplasmic membrane), and thus conserves the redox energy in a proton gradient. The protein is NADH-quinone oxidoreductase subunit D 1 of Sorangium cellulosum (strain So ce56) (Polyangium cellulosum (strain So ce56)).